Here is a 752-residue protein sequence, read N- to C-terminus: DNA ligase (752 aa).

Positions 1-25 are disordered; that stretch reads MKRNGFVPSNSVGRRGIPSNSTSSA. NAD(+) contacts are provided by residues 91–95, 140–141, and glutamate 170; these read DADFD and SL. The active-site N6-AMP-lysine intermediate is the lysine 172. Arginine 193, glutamate 233, lysine 350, and lysine 374 together coordinate NAD(+). Positions 474, 477, 493, and 499 each coordinate Zn(2+). Positions 669–752 constitute a BRCT domain; that stretch reads STPRTLAGLT…TLLDGGPAAL (84 aa).

It belongs to the NAD-dependent DNA ligase family. LigA subfamily. The cofactor is Mg(2+). Mn(2+) is required as a cofactor.

It catalyses the reaction NAD(+) + (deoxyribonucleotide)n-3'-hydroxyl + 5'-phospho-(deoxyribonucleotide)m = (deoxyribonucleotide)n+m + AMP + beta-nicotinamide D-nucleotide.. Functionally, DNA ligase that catalyzes the formation of phosphodiester linkages between 5'-phosphoryl and 3'-hydroxyl groups in double-stranded DNA using NAD as a coenzyme and as the energy source for the reaction. It is essential for DNA replication and repair of damaged DNA. The polypeptide is DNA ligase (Nocardioides sp. (strain ATCC BAA-499 / JS614)).